The chain runs to 179 residues: Large ribosomal subunit protein uL6 (179 aa).

It belongs to the universal ribosomal protein uL6 family. As to quaternary structure, part of the 50S ribosomal subunit.

Functionally, this protein binds to the 23S rRNA, and is important in its secondary structure. It is located near the subunit interface in the base of the L7/L12 stalk, and near the tRNA binding site of the peptidyltransferase center. This chain is Large ribosomal subunit protein uL6, found in Parasynechococcus marenigrum (strain WH8102).